We begin with the raw amino-acid sequence, 354 residues long: DNA polymerase IV (354 aa).

The region spanning 7–188 is the UmuC domain; sequence IIHVDMDCFF…LPLAKIPGVG (182 aa). The Mg(2+) site is built by Asp11 and Asp106. Residue Glu107 is part of the active site.

This sequence belongs to the DNA polymerase type-Y family. As to quaternary structure, monomer. Requires Mg(2+) as cofactor.

It is found in the cytoplasm. It catalyses the reaction DNA(n) + a 2'-deoxyribonucleoside 5'-triphosphate = DNA(n+1) + diphosphate. Its function is as follows. Poorly processive, error-prone DNA polymerase involved in untargeted mutagenesis. Copies undamaged DNA at stalled replication forks, which arise in vivo from mismatched or misaligned primer ends. These misaligned primers can be extended by PolIV. Exhibits no 3'-5' exonuclease (proofreading) activity. May be involved in translesional synthesis, in conjunction with the beta clamp from PolIII. The chain is DNA polymerase IV from Shigella boydii serotype 18 (strain CDC 3083-94 / BS512).